Here is a 360-residue protein sequence, read N- to C-terminus: Outer mitochondrial transmembrane helix translocase (360 aa).

Residues 1-15 lie on the Mitochondrial intermembrane side of the membrane; it reads MVHGEAFSRPLSRNE. The chain crosses the membrane as a helical span at residues 16–34; that stretch reads VVGLIFRLTIFGAVTYFTI. Over 35 to 360 the chain is Cytoplasmic; sequence KWMVDAIDPT…QNVLMHVSLD (326 aa). 133–140 contributes to the ATP binding site; sequence GPPGCGKT.

It belongs to the AAA ATPase family. MSP1 subfamily.

The protein localises to the mitochondrion outer membrane. The protein resides in the peroxisome membrane. It is found in the postsynaptic cell membrane. It carries out the reaction [protein]-with a C-terminal TM segment(out) + ATP + H2O = [protein]-with a C-terminal TM segment(in) + ADP + phosphate + H(+). In terms of biological role, outer mitochondrial translocase required to remove mislocalized tail-anchored transmembrane proteins on mitochondria. Specifically recognizes and binds tail-anchored transmembrane proteins: acts as a dislocase that mediates the ATP-dependent extraction of mistargeted tail-anchored transmembrane proteins from the mitochondrion outer membrane. Also plays a critical role in regulating the surface expression of AMPA receptors (AMPAR), thereby regulating synaptic plasticity and learning and memory. In Xenopus tropicalis (Western clawed frog), this protein is Outer mitochondrial transmembrane helix translocase.